The following is a 654-amino-acid chain: MLFSRPPIRSPWISAFRSASQLPLSRPRFFSISLSRYSVDMETVNTSERLSRLRELMQEHKVDVYIVPSEDSHQSEYIAPCDGRREFISGFSGSAGTAIVSLSKAALSTDGRYFNQASKQLDNNWQLLKRGVEGFPTWQEWTTEQAEGGKVVGVDPALITASGARSLSETLKKNGSTLVGVQQNLVDLVWGKDRPAPPREKVRVHPEKYAGKSFQEKISELRKELESRKSAGFIVSMLDEIAWLFNLRGSDIPYNPVFFSFATITPTTTELYVDADKLTPEVTAHLGQDVVIKPYDAIYADAKALSETRKQEAGETASKFLLSNKASWALSLSLGGEGQVEEVRSPIGDAKAVKNDVELAGMRACHIRDGAALTEYFAWLENELVNKKSTLDEVDAADKLEQIRSKHDLFVGLSFDTISSTGPNGAVIHYKPEKGSCSIIDPNAIYLCDSGAQYLDGTTDVTRTFHFGQPTELEKKAFTLVLKGVIGLDTAVFPKGTSGFALDVLARQYLWKEGLDYLHGTGHGIGSYLNVHEGPIGVGTRVQYTEVPIAPGNVISDEPGFYEDGKFGIRIENVIMAREVQTTHKFGDKPWLGFEHVTMAPIGRNLIEPSLLSDAELKWVNDYHREIWEKTHHFFENDEYTRSWLQRETQPISK.

D449, D460, E558, and E572 together coordinate Mn(2+).

This sequence belongs to the peptidase M24B family. Mn(2+) is required as a cofactor.

It carries out the reaction Release of any N-terminal amino acid, including proline, that is linked to proline, even from a dipeptide or tripeptide.. Catalyzes the removal of a penultimate prolyl residue from the N-termini of peptides. The protein is Probable Xaa-Pro aminopeptidase P (ampp) of Aspergillus flavus (strain ATCC 200026 / FGSC A1120 / IAM 13836 / NRRL 3357 / JCM 12722 / SRRC 167).